A 218-amino-acid polypeptide reads, in one-letter code: Large ribosomal subunit protein uL3 (218 aa).

A disordered region spans residues 127–167 (GFSRGPMSHGSKNHRLPGSIGAGTTPGRVYPGKRMAGRMGG).

Belongs to the universal ribosomal protein uL3 family. In terms of assembly, part of the 50S ribosomal subunit. Forms a cluster with proteins L14 and L19.

In terms of biological role, one of the primary rRNA binding proteins, it binds directly near the 3'-end of the 23S rRNA, where it nucleates assembly of the 50S subunit. This chain is Large ribosomal subunit protein uL3, found in Prochlorococcus marinus (strain NATL1A).